A 77-amino-acid polypeptide reads, in one-letter code: Small ribosomal subunit protein uS17 (77 aa).

Belongs to the universal ribosomal protein uS17 family. As to quaternary structure, part of the 30S ribosomal subunit.

In terms of biological role, one of the primary rRNA binding proteins, it binds specifically to the 5'-end of 16S ribosomal RNA. In Rickettsia bellii (strain OSU 85-389), this protein is Small ribosomal subunit protein uS17.